The chain runs to 100 residues: Urease subunit gamma (100 aa).

It belongs to the urease gamma subunit family. In terms of assembly, heterotrimer of UreA (gamma), UreB (beta) and UreC (alpha) subunits. Three heterotrimers associate to form the active enzyme.

The protein localises to the cytoplasm. The enzyme catalyses urea + 2 H2O + H(+) = hydrogencarbonate + 2 NH4(+). It functions in the pathway nitrogen metabolism; urea degradation; CO(2) and NH(3) from urea (urease route): step 1/1. The polypeptide is Urease subunit gamma (Rhizobium meliloti (strain 1021) (Ensifer meliloti)).